The primary structure comprises 531 residues: Sterol 26-hydroxylase, mitochondrial (531 aa).

A mitochondrion-targeting transit peptide spans 1-33 (MAALGCARLRWALRGAGRGLCPHGARAKAAIPA). At lysine 283 the chain carries N6-acetyllysine. The tract at residues 384-398 (PLLKAVLKETLRLYP) is sterol-binding. Cysteine 476 contacts heme. 2 positions are modified to N6-acetyllysine: lysine 509 and lysine 520.

It belongs to the cytochrome P450 family. In terms of assembly, interacts with HSP70; this interaction is required for initial targeting to mitochondria. It depends on heme as a cofactor. As to expression, expressed in the neural retina and underlying retinal pigment epithelium (at protein level). Expressed in the gray and white matter of cerebellum (at protein level).

It is found in the mitochondrion inner membrane. The enzyme catalyses 5beta-cholestane-3alpha,7alpha,12alpha-triol + 6 reduced [adrenodoxin] + 3 O2 + 5 H(+) = (25R)-3alpha,7alpha,12alpha-trihydroxy-5beta-cholestan-26-oate + 6 oxidized [adrenodoxin] + 4 H2O. The catalysed reaction is cholestanol + 2 reduced [adrenodoxin] + O2 + 2 H(+) = (25R)-26-hydroxycholestanol + 2 oxidized [adrenodoxin] + H2O. It carries out the reaction (25R)-3beta-hydroxycholest-5-en-7-one-26-al + 2 reduced [adrenodoxin] + O2 + H(+) = (25R)-3beta-hydroxycholest-5-en-7-one-26-oate + 2 oxidized [adrenodoxin] + H2O. It catalyses the reaction (25R)-3beta,26-dihydroxycholest-5-en-7-one + 2 reduced [adrenodoxin] + O2 + 2 H(+) = (25R)-3beta-hydroxycholest-5-en-7-one-26-al + 2 oxidized [adrenodoxin] + 2 H2O. The enzyme catalyses 7-oxocholesterol + 2 reduced [adrenodoxin] + O2 + 2 H(+) = (25R)-3beta,26-dihydroxycholest-5-en-7-one + 2 oxidized [adrenodoxin] + H2O. The catalysed reaction is calciol + 2 reduced [adrenodoxin] + O2 + 2 H(+) = calcidiol + 2 oxidized [adrenodoxin] + H2O. It carries out the reaction (25R)-5beta-cholestane-3alpha,7alpha,12alpha,26-tetrol + 2 reduced [adrenodoxin] + O2 + 2 H(+) = (25R)-3alpha,7alpha,12alpha-trihydroxy-5beta-cholestan-26-al + 2 oxidized [adrenodoxin] + 2 H2O. It catalyses the reaction 2 reduced [adrenodoxin] + cholesterol + O2 + 2 H(+) = (25R)-cholest-5-ene-3beta,26-diol + 2 oxidized [adrenodoxin] + H2O. The enzyme catalyses (25R)-3beta,4beta-dihydroxycholest-5-en-26-al + 2 reduced [adrenodoxin] + O2 + H(+) = (25R)-3beta,4beta-dihydroxycholest-5-en-26-oate + 2 oxidized [adrenodoxin] + H2O. The catalysed reaction is (25R)-4beta,26-dihydroxycholesterol + 2 reduced [adrenodoxin] + O2 + 2 H(+) = (25R)-3beta,4beta-dihydroxycholest-5-en-26-al + 2 oxidized [adrenodoxin] + 2 H2O. It carries out the reaction 4beta-hydroxycholesterol + 2 reduced [adrenodoxin] + O2 + 2 H(+) = (25R)-4beta,26-dihydroxycholesterol + 2 oxidized [adrenodoxin] + H2O. It catalyses the reaction (25R)-3beta-hydroxy-5-cholesten-26-al + 2 reduced [adrenodoxin] + O2 + H(+) = (25R)-3beta-hydroxy-5-cholestenoate + 2 oxidized [adrenodoxin] + H2O. The enzyme catalyses (25R)-cholest-5-ene-3beta,26-diol + 2 reduced [adrenodoxin] + O2 + 2 H(+) = (25R)-3beta-hydroxy-5-cholesten-26-al + 2 oxidized [adrenodoxin] + 2 H2O. The catalysed reaction is (25R)-3alpha,7alpha,12alpha-trihydroxy-5beta-cholestan-26-al + 2 reduced [adrenodoxin] + O2 + H(+) = (25R)-3alpha,7alpha,12alpha-trihydroxy-5beta-cholestan-26-oate + 2 oxidized [adrenodoxin] + H2O. It carries out the reaction 5beta-cholestane-3alpha,7alpha,12alpha-triol + 2 reduced [adrenodoxin] + O2 + 2 H(+) = (25R)-5beta-cholestane-3alpha,7alpha,12alpha,26-tetrol + 2 oxidized [adrenodoxin] + H2O. The protein operates within hormone biosynthesis; cholecalciferol biosynthesis. Its pathway is steroid metabolism; cholesterol degradation. It participates in lipid metabolism; bile acid biosynthesis. In terms of biological role, cytochrome P450 monooxygenase that catalyzes regio- and stereospecific hydroxylation of cholesterol and its derivatives. Hydroxylates (with R stereochemistry) the terminal methyl group of cholesterol side-chain in a three step reaction to yield at first a C26 alcohol, then a C26 aldehyde and finally a C26 acid. Regulates cholesterol homeostasis by catalyzing the conversion of excess cholesterol to bile acids via both the 'neutral' (classic) and the 'acid' (alternative) pathways. May also regulate cholesterol homeostasis via generation of active oxysterols, which act as ligands for NR1H2 and NR1H3 nuclear receptors, modulating the transcription of genes involved in lipid metabolism. Plays a role in cholestanol metabolism in the cerebellum. Similarly to cholesterol, hydroxylates cholestanol and may facilitate sterol diffusion through the blood-brain barrier to the systemic circulation for further degradation. Also hydroxylates retinal 7-ketocholesterol, a noxious oxysterol with pro-inflammatory and pro-apoptotic effects, and may play a role in its elimination from the retinal pigment epithelium. May play a redundant role in vitamin D biosynthesis. Catalyzes 25-hydroxylation of vitamin D3 that is required for its conversion to a functionally active form. The chain is Sterol 26-hydroxylase, mitochondrial from Homo sapiens (Human).